We begin with the raw amino-acid sequence, 128 residues long: uncharacterized protein (128 aa).

It is found in the mitochondrion. This is an uncharacterized protein from Schizosaccharomyces pombe (strain 972 / ATCC 24843) (Fission yeast).